A 150-amino-acid chain; its full sequence is Probable FKBP-type 16 kDa peptidyl-prolyl cis-trans isomerase (150 aa).

The PPIase FKBP-type domain occupies 14–88 (NTEVTLHFAL…PNPQNVQIIP (75 aa)).

This sequence belongs to the FKBP-type PPIase family.

It catalyses the reaction [protein]-peptidylproline (omega=180) = [protein]-peptidylproline (omega=0). In terms of biological role, PPIases accelerate the folding of proteins. The protein is Probable FKBP-type 16 kDa peptidyl-prolyl cis-trans isomerase (yaaD) of Pseudomonas fluorescens.